We begin with the raw amino-acid sequence, 393 residues long: Acetate kinase (393 aa).

Residue Asn8 participates in Mg(2+) binding. Lys15 contributes to the ATP binding site. Position 91 (Arg91) interacts with substrate. The active-site Proton donor/acceptor is Asp148. ATP-binding positions include 206–210 (HLGSG), 280–282 (DMR), and 325–329 (GVGEN). Glu376 is a binding site for Mg(2+).

This sequence belongs to the acetokinase family. Homodimer. The cofactor is Mg(2+). Mn(2+) is required as a cofactor.

It localises to the cytoplasm. The enzyme catalyses acetate + ATP = acetyl phosphate + ADP. It functions in the pathway metabolic intermediate biosynthesis; acetyl-CoA biosynthesis; acetyl-CoA from acetate: step 1/2. Catalyzes the formation of acetyl phosphate from acetate and ATP. Can also catalyze the reverse reaction. This chain is Acetate kinase, found in Rhizobium meliloti (Ensifer meliloti).